A 123-amino-acid chain; its full sequence is DNA-directed RNA polymerase I subunit RPA12 (123 aa).

Residues Cys-17, Cys-20, Cys-35, Cys-38, Cys-84, and Cys-87 each coordinate Zn(2+). A C4-type zinc finger spans residues 17-38 (CPDCGSVLPLPGVQDAVACTRC). The segment at 80-120 (VDRRCSRCGHEGMAYHTRQMRSADEGQTVFYTCTNCKFQEK) adopts a TFIIS-type zinc-finger fold. The Hairpin signature appears at 103 to 104 (DE). Residues Cys-112 and Cys-115 each contribute to the Zn(2+) site.

The protein belongs to the archaeal RpoM/eukaryotic RPA12/RPB9/RPC11 RNA polymerase family. Component of the RNA polymerase I (Pol I) complex consisting of at least 13 subunits.

The protein localises to the nucleus. Its subcellular location is the nucleolus. In terms of biological role, core component of RNA polymerase I (Pol I), a DNA-dependent RNA polymerase which synthesizes ribosomal RNA precursors using the four ribonucleoside triphosphates as substrates. Can mediate Pol I proofreading of the nascent RNA transcript. Anchors into the Pol I active site to monitor transcription fidelity and cleave mis-incorporated 5'-ribonucleotides. The protein is DNA-directed RNA polymerase I subunit RPA12 of Bos taurus (Bovine).